The chain runs to 311 residues: tRNA-cytidine(32) 2-sulfurtransferase (311 aa).

The PP-loop motif signature appears at 47-52; sequence SGGKDS. Residues Cys-122, Cys-125, and Cys-213 each contribute to the [4Fe-4S] cluster site.

Belongs to the TtcA family. In terms of assembly, homodimer. Mg(2+) serves as cofactor. The cofactor is [4Fe-4S] cluster.

The protein resides in the cytoplasm. It carries out the reaction cytidine(32) in tRNA + S-sulfanyl-L-cysteinyl-[cysteine desulfurase] + AH2 + ATP = 2-thiocytidine(32) in tRNA + L-cysteinyl-[cysteine desulfurase] + A + AMP + diphosphate + H(+). The protein operates within tRNA modification. Catalyzes the ATP-dependent 2-thiolation of cytidine in position 32 of tRNA, to form 2-thiocytidine (s(2)C32). The sulfur atoms are provided by the cysteine/cysteine desulfurase (IscS) system. The polypeptide is tRNA-cytidine(32) 2-sulfurtransferase (Escherichia fergusonii (strain ATCC 35469 / DSM 13698 / CCUG 18766 / IAM 14443 / JCM 21226 / LMG 7866 / NBRC 102419 / NCTC 12128 / CDC 0568-73)).